We begin with the raw amino-acid sequence, 116 residues long: Small ribosomal subunit protein bS18c (116 aa).

Residues 1–13 (MKPSFRNTSPSFR) are compositionally biased toward polar residues. Positions 1 to 51 (MKPSFRNTSPSFRNRSKPYFRNRSKPYFRNRSKPSFRNTSKRFSPNQQSFR) are disordered. The span at 14–34 (NRSKPYFRNRSKPYFRNRSKP) shows a compositional bias: basic residues. The span at 35 to 49 (SFRNTSKRFSPNQQS) shows a compositional bias: polar residues.

Belongs to the bacterial ribosomal protein bS18 family. In terms of assembly, part of the 30S ribosomal subunit.

It localises to the plastid. The protein resides in the chloroplast. The sequence is that of Small ribosomal subunit protein bS18c from Cryptomeria japonica (Japanese cedar).